The primary structure comprises 624 residues: Serine/threonine-protein kinase ppk35 (624 aa).

The 304-residue stretch at 162 to 465 folds into the Protein kinase domain; sequence FDLLVKLGQG…TIEIQKHPFF (304 aa). Residues 168–176 and K191 contribute to the ATP site; that span reads LGQGGYGSV. The active-site Proton acceptor is the D285. The region spanning 466-548 is the AGC-kinase C-terminal domain; sequence KRLHWNGLRK…KYRPNARKPL (83 aa). The segment covering 545–559 has biased composition (basic residues); sequence RKPLVGRHREKRQLR. The interval 545–617 is disordered; the sequence is RKPLVGRHRE…VHRLLERKGK (73 aa). Residues 560-574 are compositionally biased toward basic and acidic residues; the sequence is KEKPEKKNNSTKQKD. Positions 596–609 are enriched in basic residues; it reads SKTKGHKTKSSRVH.

It belongs to the protein kinase superfamily. Ser/Thr protein kinase family.

It is found in the cytoplasm. Its subcellular location is the nucleus. It localises to the nucleolus. It carries out the reaction L-seryl-[protein] + ATP = O-phospho-L-seryl-[protein] + ADP + H(+). The enzyme catalyses L-threonyl-[protein] + ATP = O-phospho-L-threonyl-[protein] + ADP + H(+). In terms of biological role, has a role in meiosis. The polypeptide is Serine/threonine-protein kinase ppk35 (ppk35) (Schizosaccharomyces pombe (strain 972 / ATCC 24843) (Fission yeast)).